A 142-amino-acid polypeptide reads, in one-letter code: Small ribosomal subunit protein uS12 (142 aa).

It belongs to the universal ribosomal protein uS12 family.

The chain is Small ribosomal subunit protein uS12 from Tetrahymena thermophila.